We begin with the raw amino-acid sequence, 437 residues long: Trigger factor (437 aa).

The PPIase FKBP-type domain occupies G163–P248.

The protein belongs to the FKBP-type PPIase family. Tig subfamily.

It is found in the cytoplasm. It catalyses the reaction [protein]-peptidylproline (omega=180) = [protein]-peptidylproline (omega=0). In terms of biological role, involved in protein export. Acts as a chaperone by maintaining the newly synthesized protein in an open conformation. Functions as a peptidyl-prolyl cis-trans isomerase. This Neisseria gonorrhoeae (strain NCCP11945) protein is Trigger factor.